The following is a 1755-amino-acid chain: Transposon Ty1-DR6 Gag-Pol polyprotein (1755 aa).

3 stretches are compositionally biased toward polar residues: residues 1-23 (MESQ…SVTS), 48-60 (TKAN…TPAS), and 127-152 (QSQF…GNTF). Disordered regions lie at residues 1-93 (MESQ…MMTQ), 126-174 (PQSQ…PPPM), and 352-421 (GSRN…SKST). Residues 153 to 165 (TDSSSADSDMTST) are compositionally biased toward low complexity. Residues 299-401 (NNGIHINNKV…NSKSKTARAH (103 aa)) form an RNA-binding region. The span at 402-418 (NVSTSNNSPSTDNDSIS) shows a compositional bias: low complexity. S416 bears the Phosphoserine mark. The active-site For protease activity; shared with dimeric partner is D461. The integrase-type zinc finger-like stretch occupies residues 583–640 (NVHTSESTRKYPYPFIHRMLAHANAQTIRYSLKNNTITYFNESDVDWSSAIDYQCPDC). Residues 660–835 (NSYEPFQYLH…AGLDISTLLP (176 aa)) enclose the Integrase catalytic domain. Residues D671 and D736 each contribute to the Mg(2+) site. Disordered regions lie at residues 956–1087 (SKAV…ETEK), 1092–1111 (RSPS…NIVP), and 1130–1187 (DLPL…DNET). The span at 960-969 (SPTDSTPPST) shows a compositional bias: low complexity. Polar residues predominate over residues 1005 to 1015 (STPQISNIEST). Residues 1038-1053 (ESSHASKSKDFRHSDS) show a composition bias toward basic and acidic residues. Composition is skewed to polar residues over residues 1054 to 1082 (YSEN…QISD) and 1101 to 1111 (PENNSSHNIVP). The Bipartite nuclear localization signal signature appears at 1178 to 1212 (KKRSLEDNETEIKVSRDTWNTKNMRSLEPPRSKKR). The region spanning 1338-1476 (NNYYITQLDI…DILGLEIKYQ (139 aa)) is the Reverse transcriptase Ty1/copia-type domain. Residues D1346, D1427, D1428, D1610, E1652, and D1685 each coordinate Mg(2+). One can recognise an RNase H Ty1/copia-type domain in the interval 1610–1752 (DASYGNQPYY…IKTFKLLTNK (143 aa)).

The capsid protein forms a homotrimer, from which the VLPs are assembled. The protease is a homodimer, whose active site consists of two apposed aspartic acid residues. Post-translationally, initially, virus-like particles (VLPs) are composed of the structural unprocessed proteins Gag and Gag-Pol, and also contain the host initiator methionine tRNA (tRNA(i)-Met) which serves as a primer for minus-strand DNA synthesis, and a dimer of genomic Ty RNA. Processing of the polyproteins occurs within the particle and proceeds by an ordered pathway, called maturation. First, the protease (PR) is released by autocatalytic cleavage of the Gag-Pol polyprotein yielding capsid protein p45 and a Pol-p154 precursor protein. This cleavage is a prerequisite for subsequent processing of Pol-p154 at the remaining sites to release the mature structural and catalytic proteins. Maturation takes place prior to the RT reaction and is required to produce transposition-competent VLPs.

The protein resides in the cytoplasm. It is found in the nucleus. The catalysed reaction is DNA(n) + a 2'-deoxyribonucleoside 5'-triphosphate = DNA(n+1) + diphosphate. It catalyses the reaction Endonucleolytic cleavage to 5'-phosphomonoester.. Capsid protein (CA) is the structural component of the virus-like particle (VLP), forming the shell that encapsulates the retrotransposons dimeric RNA genome. The particles are assembled from trimer-clustered units and there are holes in the capsid shells that allow for the diffusion of macromolecules. CA also has nucleocapsid-like chaperone activity, promoting primer tRNA(i)-Met annealing to the multipartite primer-binding site (PBS), dimerization of Ty1 RNA and initiation of reverse transcription. In terms of biological role, the aspartyl protease (PR) mediates the proteolytic cleavages of the Gag and Gag-Pol polyproteins after assembly of the VLP. Functionally, reverse transcriptase/ribonuclease H (RT) is a multifunctional enzyme that catalyzes the conversion of the retro-elements RNA genome into dsDNA within the VLP. The enzyme displays a DNA polymerase activity that can copy either DNA or RNA templates, and a ribonuclease H (RNase H) activity that cleaves the RNA strand of RNA-DNA heteroduplexes during plus-strand synthesis and hydrolyzes RNA primers. The conversion leads to a linear dsDNA copy of the retrotransposon that includes long terminal repeats (LTRs) at both ends. Its function is as follows. Integrase (IN) targets the VLP to the nucleus, where a subparticle preintegration complex (PIC) containing at least integrase and the newly synthesized dsDNA copy of the retrotransposon must transit the nuclear membrane. Once in the nucleus, integrase performs the integration of the dsDNA into the host genome. The protein is Transposon Ty1-DR6 Gag-Pol polyprotein (TY1B-DR6) of Saccharomyces cerevisiae (strain ATCC 204508 / S288c) (Baker's yeast).